The chain runs to 293 residues: Glutamyl-Q tRNA(Asp) synthetase (293 aa).

L-glutamate-binding positions include 9-13 (RFAPS) and Glu45. The short motif at 12–22 (PSPSGELHFGS) is the 'HIGH' region element. Zn(2+) contacts are provided by Cys101, Cys103, Tyr115, and Cys119. The L-glutamate site is built by Tyr172 and Arg190. The 'KMSKS' region motif lies at 228-232 (KLSKQ). An ATP-binding site is contributed by Lys231.

It belongs to the class-I aminoacyl-tRNA synthetase family. GluQ subfamily. Zn(2+) serves as cofactor.

Functionally, catalyzes the tRNA-independent activation of glutamate in presence of ATP and the subsequent transfer of glutamate onto a tRNA(Asp). Glutamate is transferred on the 2-amino-5-(4,5-dihydroxy-2-cyclopenten-1-yl) moiety of the queuosine in the wobble position of the QUC anticodon. The polypeptide is Glutamyl-Q tRNA(Asp) synthetase (Klebsiella pneumoniae (strain 342)).